Consider the following 2302-residue polypeptide: Phosphatidylinositol phosphatase PTPRQ (2302 aa).

An N-terminal signal peptide occupies residues 1–18 (MMDFHFSFLFLLIGTSES). At 19 to 1908 (QVDVSSSFDG…GEGLSERTVE (1890 aa)) the chain is on the extracellular side. An N-linked (GlcNAc...) asparagine glycan is attached at N54. 17 consecutive Fibronectin type-III domains span residues 60–155 (PPVF…TAES), 159–254 (KVVN…SSST), 310–398 (PPQN…PPDV), 401–501 (AVFD…PHND), 474–566 (GFYE…TVRT), 570–665 (VPSS…TPED), 670–759 (SPQD…TSET), 764–854 (APEN…TEED), 859–948 (PPQN…TPEG), 953–1053 (PPND…TDQD), 1058–1151 (PVGN…TEED), 1156–1243 (PPII…TDES), 1248–1341 (PPQN…TQES), 1345–1431 (AVRN…LPET), 1435–1539 (APTN…TLPG), 1544–1642 (PPEN…TLES), and 1647–1748 (PPNN…IKAP). N162, N169, N318, N354, and N389 each carry an N-linked (GlcNAc...) asparagine glycan. N733 and N746 each carry an N-linked (GlcNAc...) asparagine glycan. N-linked (GlcNAc...) asparagine glycosylation is found at N904, N998, N1010, and N1040. N1251 and N1256 each carry an N-linked (GlcNAc...) asparagine glycan. N1805 carries an N-linked (GlcNAc...) asparagine glycan. A helical transmembrane segment spans residues 1909–1929 (IILSVTLCILSIILLGTAIFA). The Cytoplasmic segment spans residues 1930–2302 (FVRIRQKQKE…VELEWEETTM (373 aa)). The Tyrosine-protein phosphatase domain occupies 2006–2262 (FQEEFSELPK…IFLHQCILDL (257 aa)). C2203 functions as the Phosphocysteine intermediate in the catalytic mechanism.

Belongs to the protein-tyrosine phosphatase family. Receptor class 2A subfamily. Interacts with TPRN. TPRN, CLIC5 and PTPQR form concentric rings at the base of stereocilia and may form a complex.

It is found in the cell projection. The protein resides in the stereocilium. It localises to the apical cell membrane. The protein localises to the basal cell membrane. It carries out the reaction a 1,2-diacyl-sn-glycero-3-phospho-(1D-myo-inositol-3,4,5-trisphosphate) + H2O = a 1,2-diacyl-sn-glycero-3-phospho-(1D-myo-inositol-4,5-bisphosphate) + phosphate. It catalyses the reaction a 1,2-diacyl-sn-glycero-3-phospho-(1D-myo-inositol-3,4,5-trisphosphate) + H2O = a 1,2-diacyl-sn-glycero-3-phospho-(1D-myo-inositol-3,4-bisphosphate) + phosphate. The catalysed reaction is a 1,2-diacyl-sn-glycero-3-phospho-(1D-myo-inositol-3,5-bisphosphate) + H2O = a 1,2-diacyl-sn-glycero-3-phospho-(1D-myo-inositol-5-phosphate) + phosphate. The enzyme catalyses a 1,2-diacyl-sn-glycero-3-phospho-(1D-myo-inositol-3,5-bisphosphate) + H2O = a 1,2-diacyl-sn-glycero-3-phospho-(1D-myo-inositol-3-phosphate) + phosphate. It carries out the reaction a 1,2-diacyl-sn-glycero-3-phospho-(1D-myo-inositol-4,5-bisphosphate) + H2O = a 1,2-diacyl-sn-glycero-3-phospho-(1D-myo-inositol 4-phosphate) + phosphate. Dephosphorylates phosphatidylinositol phosphates, such as phosphatidylinositol 3,4,5-trisphosphate (PIP3) and phosphatidylinositol 3,5-diphosphates, with preference for PIP3. Phosphate can be hydrolyzed from the D3 and D5 positions in the inositol ring. Has low tyrosine-protein phosphatase activity in vitro; however, the relevance of such activity in vivo is unclear. Plays an important role in adipogenesis of mesenchymal stem cells (MSCs). Regulates the phosphorylation state of AKT1 by regulating the levels of PIP3 level in MSCs and preadipocyte cells. Required for hair bundle maturation, a process that enables hair cells to detect and transmit sound and balance signals effectively, therefore affecting auditory function. May act by regulating the level of phosphatidylinositol 4,5-bisphosphate (PIP2) level in the basal region of hair bundles. The chain is Phosphatidylinositol phosphatase PTPRQ (Ptprq) from Rattus norvegicus (Rat).